The following is a 115-amino-acid chain: NADH-ubiquinone oxidoreductase chain 3 (115 aa).

3 consecutive transmembrane segments (helical) span residues Phe3 to Trp23, Phe55 to Leu75, and Leu84 to Tyr104.

It belongs to the complex I subunit 3 family. In terms of assembly, core subunit of respiratory chain NADH dehydrogenase (Complex I) which is composed of 45 different subunits. Interacts with TMEM186. Interacts with TMEM242.

Its subcellular location is the mitochondrion inner membrane. It carries out the reaction a ubiquinone + NADH + 5 H(+)(in) = a ubiquinol + NAD(+) + 4 H(+)(out). Core subunit of the mitochondrial membrane respiratory chain NADH dehydrogenase (Complex I) which catalyzes electron transfer from NADH through the respiratory chain, using ubiquinone as an electron acceptor. Essential for the catalytic activity of complex I. The sequence is that of NADH-ubiquinone oxidoreductase chain 3 from Pan paniscus (Pygmy chimpanzee).